A 147-amino-acid chain; its full sequence is Cytochrome c' (147 aa).

A signal peptide spans M1–A21. Heme c is bound by residues R31, T87, E88, C137, C140, and H141.

As to quaternary structure, homodimer. Post-translationally, binds 1 heme c group covalently per subunit.

In terms of biological role, cytochrome c' is the most widely occurring bacterial c-type cytochrome. Cytochromes c' are high-spin proteins and the heme has no sixth ligand. Their exact function is not known. This chain is Cytochrome c', found in Rhodospirillum rubrum (strain ATCC 11170 / ATH 1.1.1 / DSM 467 / LMG 4362 / NCIMB 8255 / S1).